Consider the following 539-residue polypeptide: Ell-associated factor Eaf (539 aa).

A disordered region spans residues 119–539; the sequence is TRSEMTHHKP…SSNSSDDDDD (421 aa). Residues 132-146 are compositionally biased toward polar residues; it reads PATNINHNNIPMSTN. A compositionally biased stretch (pro residues) spans 151 to 163; sequence GPGPGPGSGPSPP. Residues 174–195 show a composition bias toward polar residues; sequence KLENSTMRISSKTKVSTGSRRN. Serine 205 carries the post-translational modification Phosphoserine. Polar residues predominate over residues 220 to 238; the sequence is RSPQSAPAWNANNAQQTLP. 3 stretches are compositionally biased toward low complexity: residues 267–278, 309–337, and 345–375; these read SGSSTGSSTGQP, MHQN…YGRG, and NNYA…SHHS. Residues 420–435 show a composition bias toward acidic residues; the sequence is DSSDSDSGSESDDSTD. Low complexity-rich tracts occupy residues 461–493 and 520–533; these read HQQL…QPQQ and NDLL…SSNS.

The protein belongs to the EAF family.

It localises to the nucleus. Its function is as follows. Promotes transcriptional elongation by Su(Tpl)/ELL. Essential for development. The chain is Ell-associated factor Eaf from Drosophila willistoni (Fruit fly).